Reading from the N-terminus, the 77-residue chain is DinI-like protein in retron Ec67 (77 aa).

Belongs to the DinI family.

This chain is DinI-like protein in retron Ec67, found in Escherichia coli.